The chain runs to 256 residues: 5-oxoprolinase subunit A 2 (256 aa).

The protein belongs to the LamB/PxpA family. In terms of assembly, forms a complex composed of PxpA, PxpB and PxpC.

It catalyses the reaction 5-oxo-L-proline + ATP + 2 H2O = L-glutamate + ADP + phosphate + H(+). Catalyzes the cleavage of 5-oxoproline to form L-glutamate coupled to the hydrolysis of ATP to ADP and inorganic phosphate. The polypeptide is 5-oxoprolinase subunit A 2 (Bradyrhizobium diazoefficiens (strain JCM 10833 / BCRC 13528 / IAM 13628 / NBRC 14792 / USDA 110)).